The chain runs to 337 residues: Ketol-acid reductoisomerase (NADP(+)) (337 aa).

One can recognise a KARI N-terminal Rossmann domain in the interval 3–183 (VEMFYDDDAD…GGTRAGVIKT (181 aa)). Residues 26 to 29 (YGSQ), Lys-49, Ser-52, Ser-54, and 84 to 87 (DTAQ) contribute to the NADP(+) site. His-109 is a catalytic residue. Gly-135 contacts NADP(+). Positions 184 to 329 (TFKEETETDL…KKLRDLMSWV (146 aa)) constitute a KARI C-terminal knotted domain. Mg(2+) is bound by residues Asp-192, Glu-196, Glu-228, and Glu-232. Ser-253 contacts substrate.

Belongs to the ketol-acid reductoisomerase family. Requires Mg(2+) as cofactor.

The catalysed reaction is (2R)-2,3-dihydroxy-3-methylbutanoate + NADP(+) = (2S)-2-acetolactate + NADPH + H(+). It catalyses the reaction (2R,3R)-2,3-dihydroxy-3-methylpentanoate + NADP(+) = (S)-2-ethyl-2-hydroxy-3-oxobutanoate + NADPH + H(+). It functions in the pathway amino-acid biosynthesis; L-isoleucine biosynthesis; L-isoleucine from 2-oxobutanoate: step 2/4. The protein operates within amino-acid biosynthesis; L-valine biosynthesis; L-valine from pyruvate: step 2/4. Its function is as follows. Involved in the biosynthesis of branched-chain amino acids (BCAA). Catalyzes an alkyl-migration followed by a ketol-acid reduction of (S)-2-acetolactate (S2AL) to yield (R)-2,3-dihydroxy-isovalerate. In the isomerase reaction, S2AL is rearranged via a Mg-dependent methyl migration to produce 3-hydroxy-3-methyl-2-ketobutyrate (HMKB). In the reductase reaction, this 2-ketoacid undergoes a metal-dependent reduction by NADPH to yield (R)-2,3-dihydroxy-isovalerate. This chain is Ketol-acid reductoisomerase (NADP(+)), found in Rhodococcus erythropolis (strain PR4 / NBRC 100887).